Here is a 918-residue protein sequence, read N- to C-terminus: Cell cycle and apoptosis regulator protein 2 (918 aa).

Positions 1–35 (MSQFKRQRINPLPGGRNFSGTASTSLLGPPPGLLT) are disordered. T35 is modified (phosphothreonine). N6-acetyllysine; by KAT8 is present on K112. The residue at position 123 (K123) is an N6-methyllysine. Phosphoserine is present on S124. Disordered regions lie at residues 179 to 219 (NRFP…KPRH), 446 to 510 (KAAE…PAVI), and 568 to 637 (VSPP…ASED). An Omega-N-methylarginine modification is found at R180. Position 215 is an N6-acetyllysine; by KAT8 (K215). Composition is skewed to low complexity over residues 447-468 (AAEAAPPTQEAPGETEPTEQAP) and 482-492 (AETPEATTQQE). T454 carries the post-translational modification Phosphothreonine; by ATM, ATR and CK2. T484 carries the phosphothreonine modification. S569 is subject to Phosphoserine. Residues 572 to 597 (EPEKEEAAKEEEAIKEEVVKEPKDEA) show a composition bias toward basic and acidic residues. Residue K586 forms a Glycyl lysine isopeptide (Lys-Gly) (interchain with G-Cter in SUMO2 and SUMO3); alternate linkage. K586 participates in a covalent cross-link: Glycyl lysine isopeptide (Lys-Gly) (interchain with G-Cter in SUMO2); alternate. Positions 605-665 (ESEAPLKEDG…EEFAGAKLED (61 aa)) are interaction with MCC. Phosphoserine is present on residues S622, S670, S673, S676, S682, and S803. The segment at 699–918 (DCLLAFVFFD…VEKEEPAPSN (220 aa)) is interaction with NR1D1. The stretch at 824–904 (LENRIHTLEL…QLEIQRVVEK (81 aa)) forms a coiled coil. A Phosphothreonine modification is found at T892.

As to quaternary structure, component of the DBIRD complex. Interacts with ZNF326/ZIRD; the interaction is direct. Interacts (via N-terminus) with SIRT1, which inhibits the deacetylation of substrates. Interacts (via N-terminus) with SUV39H1; this interaction abolishes the interaction with SIRT1. Component of a nuclear receptor-mediated transcription complex composed of at least ZNF335, CCAR2 and EMSY; the complex stimulates the transcription of nuclear receptor target genes such as SOX9 and HOXA1. Within the complex interacts with EMSY and interacts with ZNF335 (via C-terminus). Components of this complex may associate with components of a histone methylation complex to form a complex at least composed of ZNF335, HCFC1, CCAR2, EMSY, MKI67, RBBP5, ASH2L and WDR5. Within this complex, interacts with ASH2L. Interacts with NR1D1. Interacts (via N-terminus) with ESR1 and ESR2. Interacts (via N-terminus) with HDAC3 (via C-terminus). Interacts with HDAC1 and MED2F. Interacts with MCC. Interacts (via N-terminus) with NR1H2 and NR1H3 in a ligand-independent manner. Interacts with CSNK2A1. Interacts (via N-terminus) with p53/TP53. Interacts (via N-terminus) with BRCA1 (via the BRCT domains). Interacts (via N-terminus) with CHEK2 (via protein kinase domain). Interacts with PSEM3. Interacts (via N-terminus) with PSIA3 and SENP1. The sumoylated form shows a preferential interaction with SIRT1 as compared to its unmodified form. Interacts with CECR2; may form part of the CERF-1 and/or CEF-5 ISWI chromatin remodeling complexes in embryonic stem cells. Post-translationally, ATM/ATR-mediated phosphorylation at Thr-454 upon DNA damage promotes binding to SIRT1. Phosphorylation at Thr-454 promotes its sumoylation by switching the binding partner of CCAR2 from SENP1 to PIAS3. In terms of processing, acetylation at Lys-112 and Lys-215 by KAT8 prevents inhibitory binding to SIRT1 and increases its deacetylase activity. Genotoxic stress induces its sumoylation and sumoylation promotes the SIRT1-CCAR2 interaction which in turn inhibits SIRT1-mediated deacetylation of p53/TP53. Sumoylation leads to transcriptional activation of p53/TP53 by sequestering SIRT1 from p53/TP53. Desumoylated by SENP1.

It localises to the nucleus. The protein resides in the cytoplasm. Its subcellular location is the cytoskeleton. It is found in the spindle. In terms of biological role, core component of the DBIRD complex, a multiprotein complex that acts at the interface between core mRNP particles and RNA polymerase II (RNAPII) and integrates transcript elongation with the regulation of alternative splicing: the DBIRD complex affects local transcript elongation rates and alternative splicing of a large set of exons embedded in (A + T)-rich DNA regions. Inhibits SIRT1 deacetylase activity leading to increasing levels of p53/TP53 acetylation and p53-mediated apoptosis. Inhibits SUV39H1 methyltransferase activity. Mediates ligand-dependent transcriptional activation by nuclear hormone receptors. Plays a critical role in maintaining genomic stability and cellular integrity following UV-induced genotoxic stress. Regulates the circadian expression of the core clock components NR1D1 and BMAL1. Enhances the transcriptional repressor activity of NR1D1 through stabilization of NR1D1 protein levels by preventing its ubiquitination and subsequent degradation. Represses the ligand-dependent transcriptional activation function of ESR2. Acts as a regulator of PCK1 expression and gluconeogenesis by a mechanism that involves, at least in part, both NR1D1 and SIRT1. Negatively regulates the deacetylase activity of HDAC3 and can alter its subcellular localization. Positively regulates the beta-catenin pathway (canonical Wnt signaling pathway) and is required for MCC-mediated repression of the beta-catenin pathway. Represses ligand-dependent transcriptional activation function of NR1H2 and NR1H3 and inhibits the interaction of SIRT1 with NR1H3. Plays an important role in tumor suppression through p53/TP53 regulation; stabilizes p53/TP53 by affecting its interaction with ubiquitin ligase MDM2. Represses the transcriptional activator activity of BRCA1. Inhibits SIRT1 in a CHEK2 and PSEM3-dependent manner and inhibits the activity of CHEK2 in vitro. The sequence is that of Cell cycle and apoptosis regulator protein 2 (CCAR2) from Pongo abelii (Sumatran orangutan).